The sequence spans 317 residues: Probable cell division protein WhiA (317 aa).

The H-T-H motif DNA-binding region spans 281-314; the sequence is SLKELGKMLEPPVGKSGVNHRLRKIEKIAEELRK.

The protein belongs to the WhiA family.

Its function is as follows. Involved in cell division and chromosome segregation. This Clostridium acetobutylicum (strain ATCC 824 / DSM 792 / JCM 1419 / IAM 19013 / LMG 5710 / NBRC 13948 / NRRL B-527 / VKM B-1787 / 2291 / W) protein is Probable cell division protein WhiA.